Here is a 395-residue protein sequence, read N- to C-terminus: Acid ceramidase (395 aa).

The N-terminal stretch at 1–21 (MLGRSRLTFVLLSVTVTCSVA) is a signal peptide. Cysteines 31 and 340 form a disulfide. The active-site Nucleophile is the Cys143. 4 N-linked (GlcNAc...) asparagine glycosylation sites follow: Asn173, Asn259, Asn342, and Asn348. Cys388 and Cys392 are joined by a disulfide.

This sequence belongs to the acid ceramidase family. Heterodimer; disulfide-linked. The heterodimer is composed of the disulfide-linked alpha and beta chains produced by autocatalytic cleavage of the precursor. N-glycosylated. In terms of processing, proteolytically cleaved into two chains alpha and beta that remain associated via a disulfide bond. Cleavage gives rise to a conformation change that activates the enzyme. The same catalytic Cys residue mediates the autoproteolytic cleavage and subsequent hydrolysis of lipid substrates. The beta chain may undergo an additional C-terminal processing.

The protein resides in the lysosome. Its subcellular location is the secreted. The catalysed reaction is an N-acylsphing-4-enine + H2O = sphing-4-enine + a fatty acid. The enzyme catalyses N-dodecanoylsphing-4-enine + H2O = dodecanoate + sphing-4-enine. It catalyses the reaction N-tetradecanoylsphing-4-enine + H2O = tetradecanoate + sphing-4-enine. It carries out the reaction N-hexadecanoylsphing-4-enine + H2O = sphing-4-enine + hexadecanoate. The catalysed reaction is N-octadecanoylsphing-4-enine + H2O = sphing-4-enine + octadecanoate. The enzyme catalyses N-dodecanoyl-(4R)-hydroxysphinganine + H2O = (4R)-hydroxysphinganine + dodecanoate. It catalyses the reaction N-(dodecanoyl)-sphinganine + H2O = dodecanoate + sphinganine. It carries out the reaction N-(acetyl)-sphing-4-enine + H2O = sphing-4-enine + acetate. The catalysed reaction is N-(hexanoyl)sphing-4-enine + H2O = hexanoate + sphing-4-enine. The enzyme catalyses N-octanoylsphing-4-enine + H2O = octanoate + sphing-4-enine. It catalyses the reaction N-(9Z-octadecenoyl)-sphing-4-enine + H2O = sphing-4-enine + (9Z)-octadecenoate. It carries out the reaction N-dodecanoylethanolamine + H2O = dodecanoate + ethanolamine. Its pathway is lipid metabolism; sphingolipid metabolism. In terms of biological role, lysosomal ceramidase that hydrolyzes sphingolipid ceramides into sphingosine and free fatty acids at acidic pH. Ceramides, sphingosine, and its phosphorylated form sphingosine-1-phosphate are bioactive lipids that mediate cellular signaling pathways regulating several biological processes including cell proliferation, apoptosis and differentiation. Has a higher catalytic efficiency towards C12-ceramides versus other ceramides. Also catalyzes the reverse reaction allowing the synthesis of ceramides from fatty acids and sphingosine. For the reverse synthetic reaction, the natural sphingosine D-erythro isomer is more efficiently utilized as a substrate compared to D-erythro-dihydrosphingosine and D-erythro-phytosphingosine, while the fatty acids with chain lengths of 12 or 14 carbons are the most efficiently used. Also has an N-acylethanolamine hydrolase activity. By regulating the levels of ceramides, sphingosine and sphingosine-1-phosphate in the epidermis, mediates the calcium-induced differentiation of epidermal keratinocytes. Also indirectly regulates tumor necrosis factor/TNF-induced apoptosis. By regulating the intracellular balance between ceramides and sphingosine, in adrenocortical cells, probably also acts as a regulator of steroidogenesis. This is Acid ceramidase from Balaenoptera acutorostrata scammoni (North Pacific minke whale).